Here is a 66-residue protein sequence, read N- to C-terminus: Large ribosomal subunit protein uL29 (66 aa).

This sequence belongs to the universal ribosomal protein uL29 family.

The sequence is that of Large ribosomal subunit protein uL29 from Lachnospira eligens (strain ATCC 27750 / DSM 3376 / VPI C15-48 / C15-B4) (Eubacterium eligens).